Consider the following 446-residue polypeptide: Peroxisomal biogenesis factor 3 (446 aa).

The Peroxisomal portion of the chain corresponds to 1-12 (MARTGLQRHRGK). A helical membrane pass occupies residues 13-33 (LLGTGAVLGGLVVAGVVAAVA). Over 34–446 (AKRWVRRQQQ…SASVYSNFGV (413 aa)) the chain is Cytoplasmic. Residues 101 to 122 (RAGEDDEQGSGGHASAGEGSVS) are disordered.

It belongs to the peroxin-3 family.

It is found in the peroxisome membrane. Functionally, involved in peroxisome biosynthesis. In Eremothecium gossypii (strain ATCC 10895 / CBS 109.51 / FGSC 9923 / NRRL Y-1056) (Yeast), this protein is Peroxisomal biogenesis factor 3 (PEX3).